A 319-amino-acid polypeptide reads, in one-letter code: Acetyl-coenzyme A carboxylase carboxyl transferase subunit alpha (319 aa).

In terms of domain architecture, CoA carboxyltransferase C-terminal spans 35 to 296 (NIDEEVHRLR…KAQLLTDLAD (262 aa)).

The protein belongs to the AccA family. Acetyl-CoA carboxylase is a heterohexamer composed of biotin carboxyl carrier protein (AccB), biotin carboxylase (AccC) and two subunits each of ACCase subunit alpha (AccA) and ACCase subunit beta (AccD).

It localises to the cytoplasm. It catalyses the reaction N(6)-carboxybiotinyl-L-lysyl-[protein] + acetyl-CoA = N(6)-biotinyl-L-lysyl-[protein] + malonyl-CoA. It functions in the pathway lipid metabolism; malonyl-CoA biosynthesis; malonyl-CoA from acetyl-CoA: step 1/1. Functionally, component of the acetyl coenzyme A carboxylase (ACC) complex. First, biotin carboxylase catalyzes the carboxylation of biotin on its carrier protein (BCCP) and then the CO(2) group is transferred by the carboxyltransferase to acetyl-CoA to form malonyl-CoA. This chain is Acetyl-coenzyme A carboxylase carboxyl transferase subunit alpha, found in Escherichia coli O45:K1 (strain S88 / ExPEC).